The following is a 316-amino-acid chain: Pantothenate kinase (316 aa).

95–102 (GSVAVGKS) serves as a coordination point for ATP.

This sequence belongs to the prokaryotic pantothenate kinase family.

It localises to the cytoplasm. It catalyses the reaction (R)-pantothenate + ATP = (R)-4'-phosphopantothenate + ADP + H(+). It participates in cofactor biosynthesis; coenzyme A biosynthesis; CoA from (R)-pantothenate: step 1/5. This Erwinia tasmaniensis (strain DSM 17950 / CFBP 7177 / CIP 109463 / NCPPB 4357 / Et1/99) protein is Pantothenate kinase.